Here is a 307-residue protein sequence, read N- to C-terminus: Ribosomal RNA small subunit methyltransferase H (307 aa).

Residues G32–H34, D52, F78, D99, and Q106 contribute to the S-adenosyl-L-methionine site.

The protein belongs to the methyltransferase superfamily. RsmH family.

It localises to the cytoplasm. The catalysed reaction is cytidine(1402) in 16S rRNA + S-adenosyl-L-methionine = N(4)-methylcytidine(1402) in 16S rRNA + S-adenosyl-L-homocysteine + H(+). In terms of biological role, specifically methylates the N4 position of cytidine in position 1402 (C1402) of 16S rRNA. This chain is Ribosomal RNA small subunit methyltransferase H, found in Caldicellulosiruptor saccharolyticus (strain ATCC 43494 / DSM 8903 / Tp8T 6331).